Consider the following 71-residue polypeptide: Conotoxin Bu24 (71 aa).

Residues 1 to 21 (MGMRMMVTVFLLVVLATTVVS) form the signal peptide. Residues 22-44 (LRSNRASDGRRGIVNKLNDLVPK) constitute a propeptide that is removed on maturation. Asparagine amide is present on Asn-70.

Belongs to the conotoxin A superfamily. Post-translationally, contains 3 disulfide bonds. They are not indicated here, since framework IV presents two different connectivities (I-V, II-III, IV-VI and I-III, II-V, IV-VI). Expressed by the venom duct.

The protein localises to the secreted. The protein is Conotoxin Bu24 of Conus bullatus (Bubble cone).